The sequence spans 118 residues: Large ribosomal subunit protein bL19 (118 aa).

Belongs to the bacterial ribosomal protein bL19 family.

In terms of biological role, this protein is located at the 30S-50S ribosomal subunit interface and may play a role in the structure and function of the aminoacyl-tRNA binding site. In Dictyoglomus thermophilum (strain ATCC 35947 / DSM 3960 / H-6-12), this protein is Large ribosomal subunit protein bL19.